The sequence spans 736 residues: Sulfate transporter (736 aa).

A disordered region spans residues 1-28 (MSSESKEPHVLSPKDSFEGNDRYSPPSR). Ser-12 and Ser-16 each carry phosphoserine. Helical transmembrane passes span 114 to 134 (VMSGLIVGILLVPQSIAYSLL) and 139 to 159 (PIYGLYTSFFASLIYFLLGTS). N-linked (GlcNAc...) asparagine glycosylation is found at Asn-201 and Asn-207. 6 helical membrane-spanning segments follow: residues 229 to 249 (FLAGIYQVAMGFFQVGFVSVY), 257 to 277 (GFVTGASFTILTSQAKYLLGL), 380 to 400 (LIPSVAVDAIAISIIGFAITV), 422 to 442 (AIGFCNIIPSFFHCFTTSAAL), 457 to 477 (LSGVMTALVLLLVLLVIAPLF), and 526 to 546 (LISTELGLLIGVCFSMFCVIL). One can recognise an STAS domain in the interval 570-721 (AYKNLQARPG…YSVYEAMAFA (152 aa)).

It belongs to the SLC26A/SulP transporter (TC 2.A.53) family. N-glycosylated.

Its subcellular location is the cell membrane. It is found in the apical cell membrane. It carries out the reaction oxalate(in) + sulfate(out) = oxalate(out) + sulfate(in). The enzyme catalyses sulfate(out) + 2 chloride(in) = sulfate(in) + 2 chloride(out). The catalysed reaction is oxalate(out) + 2 chloride(in) = oxalate(in) + 2 chloride(out). It catalyses the reaction bromide(in) + chloride(out) = bromide(out) + chloride(in). It carries out the reaction nitrate(in) + chloride(out) = nitrate(out) + chloride(in). The enzyme catalyses iodide(in) + chloride(out) = iodide(out) + chloride(in). In terms of biological role, sulfate transporter which mediates sulfate uptake into chondrocytes in order to maintain adequate sulfation of proteoglycans which is needed for cartilage development. Mediates electroneutral anion exchange of sulfate ions for oxalate ions, sulfate and oxalate ions for chloride and/or hydroxyl ions and chloride ions for bromide, iodide and nitrate ions. The coupling of sulfate transport to both hydroxyl and chloride ions likely serves to ensure transport at both acidic pH when most sulfate uptake is mediated by sulfate-hydroxide exchange and alkaline pH when most sulfate uptake is mediated by sulfate-chloride exchange. Essential for chondrocyte proliferation, differentiation and cell size expansion. This is Sulfate transporter (SLC26A2) from Equus caballus (Horse).